Here is a 278-residue protein sequence, read N- to C-terminus: Envelope glycoprotein L (278 aa).

A signal peptide spans 1 to 30 (MCRRPDCGFSFSPGPVILLWCCLLLPIVSS). One can recognise a gL betaherpesvirus-type domain in the interval 43-256 (VPAECPELTR…DKYYAGLPPE (214 aa)). Cysteines 154 and 159 form a disulfide.

Belongs to the herpesviridae glycoprotein L (gL) family. Betaherpesvirinae gL subfamily. In terms of assembly, interacts with glycoprotein H (gH); this interaction is necessary for the correct processing and cell surface expression of gH. Forms the envelope pentamer complex (PC) composed of gH, gL, UL128, UL130, and UL131A. The pentamer interacts with host NRP2. Forms the envelope trimer complex composed of gH, gL, and gO. The trimer interacts with host PDGFRA. The trimer also interacts with host EPHA2.

It localises to the virion membrane. It is found in the host cell membrane. Its subcellular location is the host Golgi apparatus. The protein localises to the host trans-Golgi network. Its function is as follows. The heterodimer glycoprotein H-glycoprotein L is required for the fusion of viral and plasma membranes leading to virus entry into the host cell. Acts as a functional inhibitor of gH and maintains gH in an inhibited form. Upon binding to host integrins, gL dissociates from gH leading to activation of the viral fusion glycoproteins gB and gH. In human cytomegalovirus, forms two distincts complexes to mediate viral entry, a trimer and a pentamer at the surface of the virion envelope. The gH-gL-gO trimer is required for infection in fibroblasts by interacting with host PDGFRA, and in glioblastoma cells by interacting with host EPHA2. The gH-gL-UL128-UL130-UL131A pentamer is essential for viral entry in epithelial, endothelial and myeloid cells via interaction with host NRP2. This is Envelope glycoprotein L from Homo sapiens (Human).